Consider the following 247-residue polypeptide: Fibroblast growth factor 14 (247 aa).

Disordered regions lie at residues 1-38 (MAAA…KNRG) and 214-247 (VGET…SKTT). A compositionally biased stretch (basic and acidic residues) spans 15 to 25 (QAREQHWDRPS).

The protein belongs to the heparin-binding growth factors family. Interacts with SCN8A. Nervous system.

It localises to the nucleus. In terms of biological role, probably involved in nervous system development and function. This chain is Fibroblast growth factor 14 (FGF14), found in Homo sapiens (Human).